The primary structure comprises 270 residues: Glutamate racemase (270 aa).

Substrate is bound by residues 15–16 (DS) and 47–48 (YG). The Proton donor/acceptor role is filled by Cys78. 79–80 (NT) is a substrate binding site. Cys189 serves as the catalytic Proton donor/acceptor. 190 to 191 (TH) serves as a coordination point for substrate.

This sequence belongs to the aspartate/glutamate racemases family.

The enzyme catalyses L-glutamate = D-glutamate. It participates in cell wall biogenesis; peptidoglycan biosynthesis. Functionally, provides the (R)-glutamate required for cell wall biosynthesis. This is Glutamate racemase from Syntrophus aciditrophicus (strain SB).